Reading from the N-terminus, the 525-residue chain is GMP synthase [glutamine-hydrolyzing] (525 aa).

Positions 9–207 (RILILDFGSQ…VLQICQCEPL (199 aa)) constitute a Glutamine amidotransferase type-1 domain. Cysteine 86 (nucleophile) is an active-site residue. Residues histidine 181 and glutamate 183 contribute to the active site. Residues 208 to 400 (WTPRNIIDQT…LGLPNAMLHR (193 aa)) enclose the GMPS ATP-PPase domain. 235-241 (SGGVDSA) serves as a coordination point for ATP.

As to quaternary structure, homodimer.

The enzyme catalyses XMP + L-glutamine + ATP + H2O = GMP + L-glutamate + AMP + diphosphate + 2 H(+). It functions in the pathway purine metabolism; GMP biosynthesis; GMP from XMP (L-Gln route): step 1/1. Functionally, catalyzes the synthesis of GMP from XMP. The polypeptide is GMP synthase [glutamine-hydrolyzing] (Hamiltonella defensa subsp. Acyrthosiphon pisum (strain 5AT)).